The chain runs to 349 residues: 3-dehydroquinate synthase (349 aa).

NAD(+) contacts are provided by residues 63–68, 97–101, 121–122, Lys-134, Lys-143, and 161–164; these read DGEDYK, GVIGD, TT, and FLQT. Positions 176, 235, and 252 each coordinate Zn(2+).

The protein belongs to the sugar phosphate cyclases superfamily. Dehydroquinate synthase family. Requires Co(2+) as cofactor. Zn(2+) is required as a cofactor. It depends on NAD(+) as a cofactor.

It is found in the cytoplasm. The enzyme catalyses 7-phospho-2-dehydro-3-deoxy-D-arabino-heptonate = 3-dehydroquinate + phosphate. It participates in metabolic intermediate biosynthesis; chorismate biosynthesis; chorismate from D-erythrose 4-phosphate and phosphoenolpyruvate: step 2/7. Functionally, catalyzes the conversion of 3-deoxy-D-arabino-heptulosonate 7-phosphate (DAHP) to dehydroquinate (DHQ). This is 3-dehydroquinate synthase from Nitratiruptor sp. (strain SB155-2).